The chain runs to 146 residues: Anti-sigma F factor (146 aa).

Belongs to the anti-sigma-factor family.

The catalysed reaction is L-seryl-[protein] + ATP = O-phospho-L-seryl-[protein] + ADP + H(+). It carries out the reaction L-threonyl-[protein] + ATP = O-phospho-L-threonyl-[protein] + ADP + H(+). Binds to sigma F and blocks its ability to form an RNA polymerase holoenzyme (E-sigma F). Phosphorylates SpoIIAA on a serine residue. This phosphorylation may enable SpoIIAA to act as an anti-anti-sigma factor that counteracts SpoIIAB and thus releases sigma F from inhibition. This Bacillus cytotoxicus (strain DSM 22905 / CIP 110041 / 391-98 / NVH 391-98) protein is Anti-sigma F factor.